The primary structure comprises 113 residues: Replication initiation control protein YabA (113 aa).

Zn(2+) is bound by residues H86, C88, C102, and C105.

This sequence belongs to the YabA family. As to quaternary structure, homotetramer. Interacts with both DnaA and DnaN, acting as a bridge between these two proteins. Zn(2+) is required as a cofactor.

It localises to the cytoplasm. Its subcellular location is the nucleoid. Involved in control of chromosome replication initiation. Inhibits the cooperative binding of DnaA to the oriC region, thus negatively regulating initiation of chromosome replication. Inhibits the ability of DnaA-ATP to form a helix on DNA; does not disassemble preformed DnaA-DNA helices. Decreases the residence time of DnaA on the chromosome at its binding sites (oriC, replication forks and promoter-binding sites). Tethers DnaA to the replication machinery via the DNA polymerase beta sliding clamp subunit (dnaN). Associates with oriC and other DnaA targets on the chromosome in a DnaA-dependent manner. This chain is Replication initiation control protein YabA, found in Pediococcus pentosaceus (strain ATCC 25745 / CCUG 21536 / LMG 10740 / 183-1w).